The following is a 52-amino-acid chain: NADH dehydrogenase [ubiquinone] 1 alpha subcomplex subunit 4 homolog (52 aa).

The chain crosses the membrane as a helical span at residues 14-30 (LYPLGAAVATAVGFATY).

Belongs to the complex I NDUFA4 subunit family.

The protein localises to the mitochondrion inner membrane. In terms of biological role, accessory subunit of the mitochondrial membrane respiratory chain NADH dehydrogenase (Complex I), that is believed to be not involved in catalysis. Complex I functions in the transfer of electrons from NADH to the respiratory chain. The immediate electron acceptor for the enzyme is believed to be ubiquinone. The sequence is that of NADH dehydrogenase [ubiquinone] 1 alpha subcomplex subunit 4 homolog from Schizosaccharomyces pombe (strain 972 / ATCC 24843) (Fission yeast).